Consider the following 605-residue polypeptide: Glucose oxidase (605 aa).

Positions 1 to 16 are cleaved as a signal peptide; that stretch reads MQTLLVSSLVVSLAAA. FAD-binding residues include Leu51 and Thr52. A glycan (N-linked (GlcNAc...) asparagine) is linked at Asn65. Glu72 is a binding site for FAD. A glycan (N-linked (GlcNAc...) asparagine) is linked at Asn111. FAD is bound by residues Ser125, Asn129, Gly130, and Thr132. N-linked (GlcNAc...) asparagine glycans are attached at residues Asn183 and Asn190. A disulfide bridge links Cys186 with Cys228. Val272 is an FAD binding site. N-linked (GlcNAc...) asparagine glycans are attached at residues Asn280, Asn377, Asn410, and Asn495. The active-site Proton acceptor is the His538. O2 is bound by residues Arg559 and Val560. FAD-binding residues include Gly571 and Met583.

It belongs to the GMC oxidoreductase family. As to quaternary structure, homodimer. The cofactor is FAD. The N-linked sugar chains of the glucose oxidase contributed to the high solubility of the enzyme in water.

It is found in the secreted. It localises to the cell wall. Its subcellular location is the cytoplasm. The protein localises to the extracellular space. The protein resides in the extracellular matrix. It catalyses the reaction beta-D-glucose + O2 = D-glucono-1,5-lactone + H2O2. In terms of biological role, glucose oxidase catalyzes the oxidation of beta-D-glucose to D-glucono-delta-lactone and hydrogen peroxide in the presence of molecular oxygen. D-glucono-delta-lactone is sequentially hydrolyzed by lactonase to D-gluconic acid, and the resulting hydrogen peroxide is hydrolyzed by catalase to oxygen and water. The activity shows high specificity to beta-D-glucose, with very low to no activity towards L-glucose, 2-deoxy-D-glucose, 3-deoxy-D-glucose, 4-deoxy-D-glucose, 5-deoxy-D-glucose, 6-deoxy-D-glucose, 3-O-methyl-D-glucose, 4-O-methyl-D-glucose, 6-O-methyl-D-glucose, 4,6-O-benzylidene-D-glucose, 5-thio-5-deoxy-D-glucose, D-mannose, D-allose, D-galactose, D-fructose, D-arabinose, D-xylose, trehalose, melibiose, L-mannomethylose, lactose, sucrose or 1,5-anhydro-D-glucitol. This chain is Glucose oxidase, found in Aspergillus niger.